Consider the following 452-residue polypeptide: Glycylpeptide N-tetradecanoyltransferase (452 aa).

Tetradecanoyl-CoA contacts are provided by residues 38–41 (YKFW), 171–173 (LCI), and 179–183 (SKRLA). Residue Leu-452 is the Proton acceptor; via carboxylate of the active site.

This sequence belongs to the NMT family. In terms of assembly, monomer.

The protein resides in the cytoplasm. The enzyme catalyses N-terminal glycyl-[protein] + tetradecanoyl-CoA = N-tetradecanoylglycyl-[protein] + CoA + H(+). Functionally, adds a myristoyl group to the N-terminal glycine residue of certain cellular proteins. This is Glycylpeptide N-tetradecanoyltransferase (NMT1) from Eremothecium gossypii (strain ATCC 10895 / CBS 109.51 / FGSC 9923 / NRRL Y-1056) (Yeast).